Here is a 490-residue protein sequence, read N- to C-terminus: GTPase Der (490 aa).

2 EngA-type G domains span residues 3 to 166 (PVIA…PRDD) and 196 to 369 (IKIA…KSAV). GTP is bound by residues 9 to 16 (GRPNVGKS), 56 to 60 (DTGGI), and 118 to 121 (NKVD). The tract at residues 162 to 189 (FPRDDDEPAEGEEEEVVAEGEEAKRIPG) is disordered. Acidic residues predominate over residues 164-181 (RDDDEPAEGEEEEVVAEG). GTP-binding positions include 202–209 (GRPNVGKS), 249–253 (DTAGV), and 314–317 (NKWD). One can recognise a KH-like domain in the interval 370 to 454 (TRWPTSRLTQ…PIRIEFKGGE (85 aa)). Positions 453-490 (GENPYEGNKNTLTDRQVNKKRRLMSHNKKASKKRRDKK) are disordered. A compositionally biased stretch (basic residues) spans 470–490 (NKKRRLMSHNKKASKKRRDKK).

This sequence belongs to the TRAFAC class TrmE-Era-EngA-EngB-Septin-like GTPase superfamily. EngA (Der) GTPase family. Associates with the 50S ribosomal subunit.

Its function is as follows. GTPase that plays an essential role in the late steps of ribosome biogenesis. The chain is GTPase Der from Pseudomonas fluorescens (strain Pf0-1).